The chain runs to 945 residues: Leucine--tRNA ligase (945 aa).

The 'HIGH' region signature appears at 43–53 (PYPNGAVHIGH). The 'KMSKS' region signature appears at 638-642 (KMSKS). Lys-641 is an ATP binding site.

Belongs to the class-I aminoacyl-tRNA synthetase family.

It localises to the cytoplasm. The enzyme catalyses tRNA(Leu) + L-leucine + ATP = L-leucyl-tRNA(Leu) + AMP + diphosphate. The protein is Leucine--tRNA ligase of Pyrobaculum islandicum (strain DSM 4184 / JCM 9189 / GEO3).